The sequence spans 201 residues: 3-isopropylmalate dehydratase small subunit (201 aa).

It belongs to the LeuD family. LeuD type 1 subfamily. In terms of assembly, heterodimer of LeuC and LeuD.

It catalyses the reaction (2R,3S)-3-isopropylmalate = (2S)-2-isopropylmalate. Its pathway is amino-acid biosynthesis; L-leucine biosynthesis; L-leucine from 3-methyl-2-oxobutanoate: step 2/4. In terms of biological role, catalyzes the isomerization between 2-isopropylmalate and 3-isopropylmalate, via the formation of 2-isopropylmaleate. In Shewanella pealeana (strain ATCC 700345 / ANG-SQ1), this protein is 3-isopropylmalate dehydratase small subunit.